Consider the following 505-residue polypeptide: Lysine--tRNA ligase (505 aa).

Mg(2+) is bound by residues glutamate 415 and glutamate 422.

It belongs to the class-II aminoacyl-tRNA synthetase family. In terms of assembly, homodimer. Mg(2+) serves as cofactor.

The protein resides in the cytoplasm. The catalysed reaction is tRNA(Lys) + L-lysine + ATP = L-lysyl-tRNA(Lys) + AMP + diphosphate. The protein is Lysine--tRNA ligase of Cronobacter sakazakii (strain ATCC BAA-894) (Enterobacter sakazakii).